We begin with the raw amino-acid sequence, 137 residues long: Ribonuclease VapC27 (137 aa).

A PINc domain is found at 7–125 (VDTSVAIPLL…ATRDARAKDT (119 aa)). The Mg(2+) site is built by Asp-8 and Asp-101.

The protein belongs to the PINc/VapC protein family. As to quaternary structure, interacts with cognate antitoxin VapB27. Mg(2+) serves as cofactor.

It localises to the secreted. In terms of biological role, probably the toxic component of a type II toxin-antitoxin (TA) system. An RNase. Its cognate antitoxin is VapB27. The sequence is that of Ribonuclease VapC27 from Mycobacterium tuberculosis (strain ATCC 25618 / H37Rv).